Reading from the N-terminus, the 263-residue chain is Protein YpjB (263 aa).

The segment covering 233 to 244 (DFDDSSSEDDPV) has biased composition (acidic residues). The segment at 233-263 (DFDDSSSEDDPVENSPVVTSPVVSSSKSSFQ) is disordered. The span at 245–263 (ENSPVVTSPVVSSSKSSFQ) shows a compositional bias: low complexity.

The polypeptide is Protein YpjB (ypjB) (Escherichia coli (strain K12)).